Consider the following 350-residue polypeptide: Small ribosomal subunit biogenesis GTPase RsgA (350 aa).

Residues 1–17 (MSKNKLSKGQQRRVNAN) are compositionally biased toward polar residues. The disordered stretch occupies residues 1–24 (MSKNKLSKGQQRRVNANHQRRLKT). Residues 104-273 (TSVLTRPDFY…VIDSPGVREF (170 aa)) enclose the CP-type G domain. Residues 160 to 163 (NKID) and 214 to 222 (GQSGVGKSS) contribute to the GTP site. Residues Cys297, Cys302, His304, and Cys310 each contribute to the Zn(2+) site.

The protein belongs to the TRAFAC class YlqF/YawG GTPase family. RsgA subfamily. In terms of assembly, monomer. Associates with 30S ribosomal subunit, binds 16S rRNA. The cofactor is Zn(2+).

It is found in the cytoplasm. One of several proteins that assist in the late maturation steps of the functional core of the 30S ribosomal subunit. Helps release RbfA from mature subunits. May play a role in the assembly of ribosomal proteins into the subunit. Circularly permuted GTPase that catalyzes slow GTP hydrolysis, GTPase activity is stimulated by the 30S ribosomal subunit. In Salmonella schwarzengrund (strain CVM19633), this protein is Small ribosomal subunit biogenesis GTPase RsgA.